The sequence spans 952 residues: Chaperone protein ClpC2, chloroplastic (952 aa).

A chloroplast-targeting transit peptide spans 1–45; that stretch reads MAWSIALLTPPFFGPGRHVQAKEYREPRGCVMKMSSLKAPVLRIQ. Positions 115-257 constitute a Clp R domain; that stretch reads FERFTEKAIK…RTQVIRMVGE (143 aa). 2 repeat regions span residues 118 to 183 and 193 to 257; these read FTEK…IGRG and FTPR…MVGE. An i region spans residues 278 to 525; sequence LEEYGTNLTK…RVRLRHAQLP (248 aa). Position 323-330 (323-330) interacts with ATP; that stretch reads GEPGVGKT. Positions 532–567 constitute a UVR domain; the sequence is EKQLRQITKEKNEAVRSQDFEMAGSHRDREIELKAE. Residues 592-783 form an II region; it reads VTESDIQHIV…LLIMTSNVGS (192 aa). 666 to 673 is a binding site for ATP; that stretch reads GPTGVGKS.

It belongs to the ClpA/ClpB family. ClpC subfamily. In terms of assembly, homodimer and homohexamer. Hexamerization upon addition of ATP. Interacts with CLPT1. Interacts with CLPS1. Stably associated with the import machinery. Interacts with CLPF. It depends on Mg(2+) as a cofactor. As to expression, expressed at low levels in roots and inflorescences. Expressed at very low levels in rosette leaves. Expressed in photosynthetic green tissues with high levels in young, developing leaf tissues.

Its subcellular location is the plastid. The protein localises to the chloroplast stroma. It is found in the chloroplast membrane. The catalysed reaction is ATP + H2O = ADP + phosphate + H(+). Its function is as follows. Molecular chaperone. May act as a suppressor of FtsH-mediated thylakoid membrane biogenesis and may enhance photoinhibition. Seems not involved in chloroplastic protein import. Probable component of the TIC-associated stromal import motor involved in inner membrane translocation. Has an ATPase activity, but no ADPase activity. Interacts with transit peptides with a positional preference. Localization of the signal sequence at the N-terminal end of a protein seems mandatory for interaction to take place. In Arabidopsis thaliana (Mouse-ear cress), this protein is Chaperone protein ClpC2, chloroplastic.